A 261-amino-acid chain; its full sequence is Phosphate import ATP-binding protein PstB 4 (261 aa).

An ABC transporter domain is found at 8-256; it reads IKVNNLSFYY…PHDSRTREYV (249 aa). ATP is bound at residue 40–47; sequence GPSGCGKS.

This sequence belongs to the ABC transporter superfamily. Phosphate importer (TC 3.A.1.7) family. As to quaternary structure, the complex is composed of two ATP-binding proteins (PstB), two transmembrane proteins (PstC and PstA) and a solute-binding protein (PstS).

The protein resides in the cell inner membrane. The catalysed reaction is phosphate(out) + ATP + H2O = ADP + 2 phosphate(in) + H(+). Functionally, part of the ABC transporter complex PstSACB involved in phosphate import. Responsible for energy coupling to the transport system. The chain is Phosphate import ATP-binding protein PstB 4 from Trichormus variabilis (strain ATCC 29413 / PCC 7937) (Anabaena variabilis).